The sequence spans 384 residues: N-acetyldiaminopimelate deacetylase (384 aa).

Asp74 is a catalytic residue. Glu133 functions as the Proton acceptor in the catalytic mechanism.

Belongs to the peptidase M20A family. N-acetyldiaminopimelate deacetylase subfamily.

The catalysed reaction is N-acetyl-(2S,6S)-2,6-diaminopimelate + H2O = (2S,6S)-2,6-diaminopimelate + acetate. Its pathway is amino-acid biosynthesis; L-lysine biosynthesis via DAP pathway; LL-2,6-diaminopimelate from (S)-tetrahydrodipicolinate (acetylase route): step 3/3. Functionally, catalyzes the conversion of N-acetyl-diaminopimelate to diaminopimelate and acetate. The chain is N-acetyldiaminopimelate deacetylase from Pediococcus pentosaceus (strain ATCC 25745 / CCUG 21536 / LMG 10740 / 183-1w).